Here is a 321-residue protein sequence, read N- to C-terminus: Cytochrome c biogenesis protein CcsA (321 aa).

7 consecutive transmembrane segments (helical) span residues 9-29, 44-64, 68-88, 143-163, 225-245, 259-273, and 288-308; these read ILTHISFSTISIVITIHLITL, GMIATFFSITGFLVSRWVSSG, LSNLYESLIFLSWTLYILHTI, MLLSYATLLCGSLLSAALLII, VISLGFTLLTVGILCGAVWAN, TWAFITWTIFAIYLH, and VASIGFLIIWICYFGINLLGI.

It belongs to the CcmF/CycK/Ccl1/NrfE/CcsA family. In terms of assembly, may interact with Ccs1.

It is found in the plastid. The protein resides in the chloroplast thylakoid membrane. Its function is as follows. Required during biogenesis of c-type cytochromes (cytochrome c6 and cytochrome f) at the step of heme attachment. The chain is Cytochrome c biogenesis protein CcsA from Zea mays (Maize).